The chain runs to 41 residues: Large ribosomal subunit protein bL36 (41 aa).

The protein belongs to the bacterial ribosomal protein bL36 family.

The sequence is that of Large ribosomal subunit protein bL36 from Ruegeria sp. (strain TM1040) (Silicibacter sp.).